Consider the following 85-residue polypeptide: Large ribosomal subunit protein bL27 (85 aa).

The disordered stretch occupies residues 1–26 (MAHKKGVGSSRNGRDSNPKMLGVKRF).

Belongs to the bacterial ribosomal protein bL27 family.

The polypeptide is Large ribosomal subunit protein bL27 (Roseiflexus sp. (strain RS-1)).